We begin with the raw amino-acid sequence, 236 residues long: Leucyl/phenylalanyl-tRNA--protein transferase (236 aa).

The protein belongs to the L/F-transferase family.

It is found in the cytoplasm. It catalyses the reaction N-terminal L-lysyl-[protein] + L-leucyl-tRNA(Leu) = N-terminal L-leucyl-L-lysyl-[protein] + tRNA(Leu) + H(+). The catalysed reaction is N-terminal L-arginyl-[protein] + L-leucyl-tRNA(Leu) = N-terminal L-leucyl-L-arginyl-[protein] + tRNA(Leu) + H(+). It carries out the reaction L-phenylalanyl-tRNA(Phe) + an N-terminal L-alpha-aminoacyl-[protein] = an N-terminal L-phenylalanyl-L-alpha-aminoacyl-[protein] + tRNA(Phe). Its function is as follows. Functions in the N-end rule pathway of protein degradation where it conjugates Leu, Phe and, less efficiently, Met from aminoacyl-tRNAs to the N-termini of proteins containing an N-terminal arginine or lysine. The polypeptide is Leucyl/phenylalanyl-tRNA--protein transferase (Yersinia enterocolitica serotype O:8 / biotype 1B (strain NCTC 13174 / 8081)).